The chain runs to 334 residues: GTPase Obg (334 aa).

The region spanning 1–159 is the Obg domain; that stretch reads MRFVDEVVIK…KEVRLELNLL (159 aa). The 172-residue stretch at 160-331 folds into the OBG-type G domain; it reads ADVALLGLPN…LAKKLNEFLQ (172 aa). Residues 166-173, 191-195, 212-215, 282-285, and 312-314 contribute to the GTP site; these read GLPNAGKS, FTTMY, DIPG, NKID, and SAA. Mg(2+)-binding residues include Ser-173 and Thr-193.

This sequence belongs to the TRAFAC class OBG-HflX-like GTPase superfamily. OBG GTPase family. Monomer. The cofactor is Mg(2+).

Its subcellular location is the cytoplasm. Functionally, an essential GTPase which binds GTP, GDP and possibly (p)ppGpp with moderate affinity, with high nucleotide exchange rates and a fairly low GTP hydrolysis rate. Plays a role in control of the cell cycle, stress response, ribosome biogenesis and in those bacteria that undergo differentiation, in morphogenesis control. The sequence is that of GTPase Obg from Francisella tularensis subsp. tularensis (strain WY96-3418).